A 223-amino-acid chain; its full sequence is RNA polymerase sigma-H factor (223 aa).

Positions 67-80 (DIVQEGMIGLYKSI) match the Polymerase core binding motif. A DNA-binding region (H-T-H motif) is located at residues 187-206 (YQEISEELNRHVKSIDNALQ).

Belongs to the sigma-70 factor family.

Its function is as follows. Sigma factors are initiation factors that promote the attachment of RNA polymerase to specific initiation sites and are then released. This sigma factor is involved in the transition to post-exponential phase in the beginning of sporulation. This chain is RNA polymerase sigma-H factor (sigH), found in Bacillus licheniformis.